Here is a 508-residue protein sequence, read N- to C-terminus: Probable glycine dehydrogenase (decarboxylating) subunit 2 (508 aa).

K277 is subject to N6-(pyridoxal phosphate)lysine.

The protein belongs to the GcvP family. C-terminal subunit subfamily. In terms of assembly, the glycine cleavage system is composed of four proteins: P, T, L and H. In this organism, the P 'protein' is a heterodimer of two subunits. The cofactor is pyridoxal 5'-phosphate.

It catalyses the reaction N(6)-[(R)-lipoyl]-L-lysyl-[glycine-cleavage complex H protein] + glycine + H(+) = N(6)-[(R)-S(8)-aminomethyldihydrolipoyl]-L-lysyl-[glycine-cleavage complex H protein] + CO2. Functionally, the glycine cleavage system catalyzes the degradation of glycine. The P protein binds the alpha-amino group of glycine through its pyridoxal phosphate cofactor; CO(2) is released and the remaining methylamine moiety is then transferred to the lipoamide cofactor of the H protein. This chain is Probable glycine dehydrogenase (decarboxylating) subunit 2, found in Saccharolobus solfataricus (strain ATCC 35092 / DSM 1617 / JCM 11322 / P2) (Sulfolobus solfataricus).